The following is a 473-amino-acid chain: H(+)/Cl(-) exchange transporter ClcA (473 aa).

At Met1–Pro32 the chain is on the cytoplasmic side. A helical transmembrane segment spans residues Leu33–Val69. Residues His70–Pro76 lie on the Periplasmic side of the membrane. A helical transmembrane segment spans residues Leu77–Tyr100. Residues Gly106–Pro110 carry the Selectivity filter part_1 motif. Residue Ser107 participates in chloride binding. The segment at residues Ile109–Leu116 is an intramembrane region (helical). Residues Glu117–Arg123 lie on the Cytoplasmic side of the membrane. Helical transmembrane passes span Trp124–Gly141 and Glu148–Phe166. The Selectivity filter part_2 signature appears at Gly146–Pro150. Topologically, residues Arg167–Thr176 are cytoplasmic. 2 intramembrane regions (helical) span residues Leu177 to Ala189 and Pro193 to Ile201. At Glu202–Ser214 the chain is on the cytoplasmic side. The chain crosses the membrane as a helical span at residues Ile215–Phe232. The Periplasmic portion of the chain corresponds to Asn233–Leu252. The chain crosses the membrane as a helical span at residues Trp253–His281. The Cytoplasmic portion of the chain corresponds to Arg282–Asn287. A helical membrane pass occupies residues Ile288–Ala309. Topologically, residues Pro310 to Ser329 are periplasmic. 2 consecutive transmembrane segments (helical) span residues Met330–Ser349 and Gly355–Val376. The Selectivity filter part_3 signature appears at Gly355–Pro359. Residues Ile356 and Phe357 each coordinate chloride. At Glu377–Ala386 the chain is on the periplasmic side. Positions Gly387–Ser401 form an intramembrane region, helical. The note=Loop between two helices intramembrane region spans Ile402–Ala404. Positions Pro405 to Thr416 form an intramembrane region, helical. The segment at residues Asp417–Leu421 is an intramembrane region (note=Loop between two helices). A helical membrane pass occupies residues Ile422–Phe438. Residues Thr439 to Thr473 are Cytoplasmic-facing. Tyr445 is a chloride binding site.

Belongs to the chloride channel (TC 2.A.49) family. ClcA subfamily. As to quaternary structure, homodimer.

Its subcellular location is the cell inner membrane. The catalysed reaction is 2 chloride(in) + H(+)(out) = 2 chloride(out) + H(+)(in). Functionally, proton-coupled chloride transporter. Functions as antiport system and exchanges two chloride ions for 1 proton. Probably acts as an electrical shunt for an outwardly-directed proton pump that is linked to amino acid decarboxylation, as part of the extreme acid resistance (XAR) response. In Shigella boydii serotype 4 (strain Sb227), this protein is H(+)/Cl(-) exchange transporter ClcA.